A 57-amino-acid chain; its full sequence is RPSFCNLPVKPGPCNGFFSAFYYSQKTNKCHSFTYGGCRGNANRFSTIEECRRTCVG.

The BPTI/Kunitz inhibitor domain occupies 5–55 (CNLPVKPGPCNGFFSAFYYSQKTNKCHSFTYGGCRGNANRFSTIEECRRTC). Cystine bridges form between Cys5/Cys55, Cys14/Cys38, and Cys30/Cys51.

It belongs to the venom Kunitz-type family. In terms of tissue distribution, expressed by the venom gland.

Its subcellular location is the secreted. Functionally, interacts with vasopressin V2 receptor (V2R/AVPR2), probably in a selective manner. Inhibits vasopressin binding human V2R in the nanomolar range (Ki=8.16 nM), and also moderately inhibits vasopressin-induced cAMP production (IC(50)=224 nM). In vivo, intraperitoneal injection of this protein into rats increases diuresis by 5.5-fold, without any loss of electrolytes. The chain is Mambaquaretin-2 from Dendroaspis viridis (Western green mamba).